Consider the following 237-residue polypeptide: Phosphoadenosine 5'-phosphosulfate reductase (237 aa).

Cysteine 231 (nucleophile; cysteine thiosulfonate intermediate) is an active-site residue.

Belongs to the PAPS reductase family. CysH subfamily.

The protein resides in the cytoplasm. The catalysed reaction is [thioredoxin]-disulfide + sulfite + adenosine 3',5'-bisphosphate + 2 H(+) = [thioredoxin]-dithiol + 3'-phosphoadenylyl sulfate. It participates in sulfur metabolism; hydrogen sulfide biosynthesis; sulfite from sulfate: step 3/3. Catalyzes the formation of sulfite from phosphoadenosine 5'-phosphosulfate (PAPS) using thioredoxin as an electron donor. The polypeptide is Phosphoadenosine 5'-phosphosulfate reductase (Xylella fastidiosa (strain 9a5c)).